A 267-amino-acid polypeptide reads, in one-letter code: Phosphate import ATP-binding protein PstB (267 aa).

The 242-residue stretch at 21-262 folds into the ABC transporter domain; it reads IAIRNLEFYY…PSKQQTEDYI (242 aa). Residue 53-60 participates in ATP binding; that stretch reads GPSGCGKS.

The protein belongs to the ABC transporter superfamily. Phosphate importer (TC 3.A.1.7) family. The complex is composed of two ATP-binding proteins (PstB), two transmembrane proteins (PstC and PstA) and a solute-binding protein (PstS).

It localises to the cell inner membrane. The catalysed reaction is phosphate(out) + ATP + H2O = ADP + 2 phosphate(in) + H(+). In terms of biological role, part of the ABC transporter complex PstSACB involved in phosphate import. Responsible for energy coupling to the transport system. The polypeptide is Phosphate import ATP-binding protein PstB (Xylella fastidiosa (strain 9a5c)).